We begin with the raw amino-acid sequence, 439 residues long: Proline--tRNA ligase (439 aa).

This sequence belongs to the class-II aminoacyl-tRNA synthetase family. ProS type 2 subfamily. In terms of assembly, homodimer.

The protein resides in the cytoplasm. It catalyses the reaction tRNA(Pro) + L-proline + ATP = L-prolyl-tRNA(Pro) + AMP + diphosphate. Catalyzes the attachment of proline to tRNA(Pro) in a two-step reaction: proline is first activated by ATP to form Pro-AMP and then transferred to the acceptor end of tRNA(Pro). This Rhodopseudomonas palustris (strain BisB5) protein is Proline--tRNA ligase.